The following is a 164-amino-acid chain: Transcriptional repressor NrdR (164 aa).

The segment at 3–34 (CPFCSAQDTKVIDSRLVADGVQIRRRRECLSC) is a zinc-finger region. The 91-residue stretch at 49 to 139 (PRLVKTDGTR…VYRSFQDISE (91 aa)) folds into the ATP-cone domain.

This sequence belongs to the NrdR family. The cofactor is Zn(2+).

Functionally, negatively regulates transcription of bacterial ribonucleotide reductase nrd genes and operons by binding to NrdR-boxes. In Alcanivorax borkumensis (strain ATCC 700651 / DSM 11573 / NCIMB 13689 / SK2), this protein is Transcriptional repressor NrdR.